The following is a 681-amino-acid chain: DNA ligase (681 aa).

NAD(+) contacts are provided by residues 44 to 48 (DYIYD), 94 to 95 (SL), and Glu124. Residue Lys126 is the N6-AMP-lysine intermediate of the active site. NAD(+) contacts are provided by Arg147, Glu181, Lys297, and Lys321. Zn(2+) contacts are provided by Cys415, Cys418, Cys433, and Cys438. The BRCT domain maps to 598–681 (DETSFFYGKK…EAQAKEGTDK (84 aa)).

Belongs to the NAD-dependent DNA ligase family. LigA subfamily. It depends on Mg(2+) as a cofactor. Mn(2+) serves as cofactor.

The enzyme catalyses NAD(+) + (deoxyribonucleotide)n-3'-hydroxyl + 5'-phospho-(deoxyribonucleotide)m = (deoxyribonucleotide)n+m + AMP + beta-nicotinamide D-nucleotide.. In terms of biological role, DNA ligase that catalyzes the formation of phosphodiester linkages between 5'-phosphoryl and 3'-hydroxyl groups in double-stranded DNA using NAD as a coenzyme and as the energy source for the reaction. It is essential for DNA replication and repair of damaged DNA. This is DNA ligase from Leuconostoc citreum (strain KM20).